The primary structure comprises 255 residues: Putative esterase YitV (255 aa).

This is Putative esterase YitV (yitV) from Bacillus subtilis (strain 168).